The sequence spans 101 residues: Urease subunit beta (101 aa).

It belongs to the urease beta subunit family. In terms of assembly, heterotrimer of UreA (gamma), UreB (beta) and UreC (alpha) subunits. Three heterotrimers associate to form the active enzyme.

The protein localises to the cytoplasm. It carries out the reaction urea + 2 H2O + H(+) = hydrogencarbonate + 2 NH4(+). It participates in nitrogen metabolism; urea degradation; CO(2) and NH(3) from urea (urease route): step 1/1. The chain is Urease subunit beta from Rhizobium leguminosarum bv. trifolii (strain WSM2304).